Here is a 194-residue protein sequence, read N- to C-terminus: ATP synthase subunit 5, mitochondrial (194 aa).

In terms of assembly, F-type ATP synthases have 2 components, the catalytic core F(1) and the membrane-embedded component F(0), linked together by a central stalk and a peripheral stalk. The central stalk, also called rotor shaft, is often seen as part of F(1). The peripheral stalk is seen as part of F(0). F(0) contains the membrane channel next to the rotor. F-type ATP synthases form dimers but each monomer functions independently in ATP generation. The dimer consists of 18 different polypeptides: ATP1 (subunit alpha, part of F(1), 3 molecules per monomer), ATP2 (subunit beta, part of F(1), 3 molecules per monomer), ATP3 (subunit gamma, part of the central stalk), ATP4 (subunit b, part of the peripheral stalk), ATP5/OSCP (subunit 5/OSCP, part of the peripheral stalk), ATP6 (subunit a, part of the peripheral stalk), ATP7 (subunit d, part of the peripheral stalk), ATP8 (subunit 8, part of the peripheral stalk), OLI1 (subunit c, part of the rotor, 10 molecules per monomer), ATP14 (subunit h, part of the peripheral stalk), ATP15 (subunit epsilon, part of the central stalk), ATP16 (subunit delta, part of the central stalk), ATP17 (subunit f, part of the peripheral stalk), ATP18 (subunit i/j, part of the peripheral stalk). Dimer-specific subunits are ATP19 (subunit k, at interface between monomers), ATP20 (subunit g, at interface between monomers), TIM11 (subunit e, at interface between monomers). Also contains subunit L.

It localises to the mitochondrion inner membrane. Functionally, mitochondrial membrane ATP synthase (F(1)F(0) ATP synthase or Complex V) produces ATP from ADP in the presence of a proton gradient across the membrane which is generated by electron transport complexes of the respiratory chain. F-type ATP synthases consist of two structural domains, F(1) - containing the extramembraneous catalytic core, and F(0) - containing the membrane proton channel, linked together by a central stalk and a peripheral stalk. During catalysis, ATP synthesis in the catalytic domain of F(1) is coupled via a rotary mechanism of the central stalk subunits to proton translocation. Part of the complex F(0) domain and the peripheral stalk, which acts as a stator to hold the catalytic alpha/ATP1(3)beta/ATP2(3) subcomplex and subunit a/ATP6 static relative to the rotary elements. The protein is ATP synthase subunit 5, mitochondrial of Pichia angusta (Yeast).